The primary structure comprises 449 residues: Glucose-6-phosphate isomerase (449 aa).

The active-site Proton donor is the Glu290. Catalysis depends on residues His311 and Lys425.

This sequence belongs to the GPI family.

The protein localises to the cytoplasm. The catalysed reaction is alpha-D-glucose 6-phosphate = beta-D-fructose 6-phosphate. Its pathway is carbohydrate biosynthesis; gluconeogenesis. It functions in the pathway carbohydrate degradation; glycolysis; D-glyceraldehyde 3-phosphate and glycerone phosphate from D-glucose: step 2/4. Its function is as follows. Catalyzes the reversible isomerization of glucose-6-phosphate to fructose-6-phosphate. The chain is Glucose-6-phosphate isomerase from Exiguobacterium sibiricum (strain DSM 17290 / CCUG 55495 / CIP 109462 / JCM 13490 / 255-15).